The sequence spans 827 residues: Periplasmic nitrate reductase (827 aa).

The segment at residues 1 to 32 is a signal peptide (tat-type signal); sequence MELSRRDFMKANAAVAAAAAAGIVLPVKNVQA. One can recognise a 4Fe-4S Mo/W bis-MGD-type domain in the interval 37-93; that stretch reads IKWDKAPCRFCGTGCSVLVGTKDGRVVATQGDPDAEVNRGLNCIKGYFLSKIMYGAD. [4Fe-4S] cluster is bound by residues C44, C47, C51, and C79. Residues K81, Q148, N173, C177, 210-217, 241-245, M371, Q375, N481, 507-508, K530, D557, and 717-726 contribute to the Mo-bis(molybdopterin guanine dinucleotide) site; these read WGSNMAEM, STFEH, SD, and TGRVLEHWHT. F793 is a substrate binding site. Mo-bis(molybdopterin guanine dinucleotide) is bound by residues N801 and K818.

Belongs to the prokaryotic molybdopterin-containing oxidoreductase family. NasA/NapA/NarB subfamily. In terms of assembly, component of the periplasmic nitrate reductase NapAB complex composed of NapA and NapB. It depends on [4Fe-4S] cluster as a cofactor. Requires Mo-bis(molybdopterin guanine dinucleotide) as cofactor. In terms of processing, predicted to be exported by the Tat system. The position of the signal peptide cleavage has not been experimentally proven.

The protein resides in the periplasm. It carries out the reaction 2 Fe(II)-[cytochrome] + nitrate + 2 H(+) = 2 Fe(III)-[cytochrome] + nitrite + H2O. In terms of biological role, catalytic subunit of the periplasmic nitrate reductase complex NapAB. Receives electrons from NapB and catalyzes the reduction of nitrate to nitrite. This is Periplasmic nitrate reductase from Haemophilus ducreyi (strain 35000HP / ATCC 700724).